A 612-amino-acid chain; its full sequence is Apoptosis-inducing factor 1, mitochondrial (612 aa).

Short sequence motifs (mitochondrial localization signal) lie at residues 1 to 30 (MFRC…PKQR) and 62 to 88 (KMDN…KTIK). A mitochondrion-targeting transit peptide spans 1 to 54 (MFRCGGLAGAFKQKLVPLVRTVYVQRPKQRNRLPGNLFQQWRVPLELQMARQMA). Residues 55–101 (SSGSSGGKMDNSVLVLIVGLSTIGAGAYAYKTIKEDQKRYNERVMGL) constitute a propeptide, removed in mature form. An N6-succinyllysine modification is found at K108. S115 is modified (phosphoserine). The segment at 133–482 (FLLIGGGTAA…KPYWHQSMFW (350 aa)) is FAD-dependent oxidoreductase. Residues 137 to 141 (GGGTA), 163 to 164 (ED), R171, and K176 contribute to the FAD site. W195 is an NAD(+) binding site. V232 is an FAD binding site. K254 is covalently cross-linked (Glycyl lysine isopeptide (Lys-Gly) (interchain with G-Cter in ubiquitin)). Phosphoserine is present on S267. R284 contributes to the FAD binding site. NAD(+) is bound by residues 307–310 (GGFL), E335, and K341. The residue at position 370 (S370) is a Phosphoserine. K387 is modified (N6-acetyllysine). G398 serves as a coordination point for NAD(+). Residue D437 coordinates FAD. The Nuclear localization signal signature appears at 445-450 (KLGRRR). NAD(+) is bound by residues 452 to 453 (EH), W482, and E492. FAD is bound by residues 453–454 (HH) and W482. A compositionally biased stretch (polar residues) spans 512–528 (AQDNPKSATEQSGTGIR). Residues 512 to 551 (AQDNPKSATEQSGTGIRSESETESEASEITIPPSAPAVPQ) are disordered. The residue at position 520 (T520) is a Phosphothreonine. 2 positions are modified to phosphoserine: S523 and S529. Position 582 (N582) interacts with NAD(+). K592 bears the N6-acetyllysine mark.

This sequence belongs to the FAD-dependent oxidoreductase family. Monomer (oxidized form). Homodimer (reduced form). Upon reduction with NADH, undergoes dimerization and forms tight, long-lived FADH2-NAD charge transfer complexes (CTC) resistant to oxidation. Also dimerizes with isoform 3 preventing its release from mitochondria. Interacts with XIAP/BIRC4. Interacts (via N-terminus) with EIF3G (via C-terminus). Interacts with PRELID1. Interacts with CHCHD4; the interaction increases in presence of NADH. Interacts with processed form of PARP1 (Poly [ADP-ribose] polymerase 1, processed C-terminus); interaction is mediated with poly-ADP-ribose chains attached to PARP1, promoting translocation into the nucleus. FAD is required as a cofactor. Under normal conditions, a 54-residue N-terminal segment is first proteolytically removed during or just after translocation into the mitochondrial intermembrane space (IMS) by the mitochondrial processing peptidase (MPP) to form the inner-membrane-anchored mature form (AIFmit). During apoptosis, it is further proteolytically processed at amino-acid position 101 leading to the generation of the mature form, which is confined to the mitochondrial IMS in a soluble form (AIFsol). AIFsol is released to the cytoplasm in response to specific death signals, and translocated to the nucleus, where it induces nuclear apoptosis in a caspase-independent manner. In terms of processing, ubiquitination by XIAP/BIRC4 does not lead to proteasomal degradation. Ubiquitination at Lys-254 by XIAP/BIRC4 blocks its ability to bind DNA and induce chromatin degradation, thereby inhibiting its ability to induce cell death. As to expression, expressed in cortical neurons (at protein level). In terms of tissue distribution, expressed in liver (at protein level).

The protein resides in the mitochondrion intermembrane space. The protein localises to the mitochondrion inner membrane. It is found in the cytoplasm. It localises to the nucleus. Its subcellular location is the perinuclear region. The protein resides in the mitochondrion. The protein localises to the cytosol. The catalysed reaction is A + NADH + H(+) = AH2 + NAD(+). Its function is as follows. Functions both as NADH oxidoreductase and as regulator of apoptosis. In response to apoptotic stimuli, it is released from the mitochondrion intermembrane space into the cytosol and to the nucleus, where it functions as a proapoptotic factor in a caspase-independent pathway. Release into the cytoplasm is mediated upon binding to poly-ADP-ribose chains. The soluble form (AIFsol) found in the nucleus induces 'parthanatos' i.e. caspase-independent fragmentation of chromosomal DNA. Binds to DNA in a sequence-independent manner. Interacts with EIF3G, and thereby inhibits the EIF3 machinery and protein synthesis, and activates caspase-7 to amplify apoptosis. Plays a critical role in caspase-independent, pyknotic cell death in hydrogen peroxide-exposed cells. In contrast, participates in normal mitochondrial metabolism. Plays an important role in the regulation of respiratory chain biogenesis by interacting with CHCHD4 and controlling CHCHD4 mitochondrial import. This Mus musculus (Mouse) protein is Apoptosis-inducing factor 1, mitochondrial.